Consider the following 255-residue polypeptide: Myogenic factor 5 (255 aa).

The bHLH domain maps to Asp83 to Leu134. Over residues Ser221–Ser242 the composition is skewed to low complexity. A disordered region spans residues Ser221–His246.

In terms of assembly, efficient DNA binding requires dimerization with another bHLH protein.

It localises to the nucleus. In terms of biological role, acts as a transcriptional activator that promotes transcription of muscle-specific target genes and plays a role in muscle differentiation. Induces fibroblasts to differentiate into myoblasts. Probable sequence specific DNA-binding protein. This Xenopus laevis (African clawed frog) protein is Myogenic factor 5 (myf5).